A 570-amino-acid polypeptide reads, in one-letter code: Proline--tRNA ligase (570 aa).

It belongs to the class-II aminoacyl-tRNA synthetase family. ProS type 1 subfamily. In terms of assembly, homodimer.

Its subcellular location is the cytoplasm. The enzyme catalyses tRNA(Pro) + L-proline + ATP = L-prolyl-tRNA(Pro) + AMP + diphosphate. Its function is as follows. Catalyzes the attachment of proline to tRNA(Pro) in a two-step reaction: proline is first activated by ATP to form Pro-AMP and then transferred to the acceptor end of tRNA(Pro). As ProRS can inadvertently accommodate and process non-cognate amino acids such as alanine and cysteine, to avoid such errors it has two additional distinct editing activities against alanine. One activity is designated as 'pretransfer' editing and involves the tRNA(Pro)-independent hydrolysis of activated Ala-AMP. The other activity is designated 'posttransfer' editing and involves deacylation of mischarged Ala-tRNA(Pro). The misacylated Cys-tRNA(Pro) is not edited by ProRS. The polypeptide is Proline--tRNA ligase (Clostridium botulinum (strain Eklund 17B / Type B)).